Reading from the N-terminus, the 201-residue chain is dITP/XTP pyrophosphatase (201 aa).

8–13 (TTNENK) is a substrate binding site. Asp68 functions as the Proton acceptor in the catalytic mechanism. Mg(2+) is bound at residue Asp68. Residues Ser69, 155–158 (FGYD), Lys177, and 182–183 (HR) contribute to the substrate site.

The protein belongs to the HAM1 NTPase family. Homodimer. The cofactor is Mg(2+).

The enzyme catalyses XTP + H2O = XMP + diphosphate + H(+). The catalysed reaction is dITP + H2O = dIMP + diphosphate + H(+). It catalyses the reaction ITP + H2O = IMP + diphosphate + H(+). In terms of biological role, pyrophosphatase that catalyzes the hydrolysis of nucleoside triphosphates to their monophosphate derivatives, with a high preference for the non-canonical purine nucleotides XTP (xanthosine triphosphate), dITP (deoxyinosine triphosphate) and ITP. Seems to function as a house-cleaning enzyme that removes non-canonical purine nucleotides from the nucleotide pool, thus preventing their incorporation into DNA/RNA and avoiding chromosomal lesions. The protein is dITP/XTP pyrophosphatase of Borrelia garinii subsp. bavariensis (strain ATCC BAA-2496 / DSM 23469 / PBi) (Borreliella bavariensis).